The primary structure comprises 297 residues: Transmembrane protein 169 (297 aa).

Residues 1-84 form a disordered region; sequence MEEPALVEGQ…PKEEEGDDFI (84 aa). Over 1-159 the chain is Extracellular; sequence MEEPALVEGQ…CQLGADRGPH (159 aa). Polar residues predominate over residues 9 to 18; the sequence is GQSQLPSPHH. The segment covering 60 to 84 has biased composition (acidic residues); it reads ETLDEEPGESEGGDQPKEEEGDDFI. Residues 160-180 form a helical membrane-spanning segment; sequence VVLWTLVCLPVVFLLSFVVSF. Topologically, residues 181-210 are cytoplasmic; that stretch reads YYGTITWYNIFLVYNEERTFWHKISCCPCL. The helical transmembrane segment at 211-231 threads the bilayer; sequence ILCYPVLIMAMASSLGLYAAV. Topologically, residues 232-297 are extracellular; it reads VQLSWSWEAW…ATQEIETSAV (66 aa).

It localises to the membrane. The chain is Transmembrane protein 169 (TMEM169) from Bos taurus (Bovine).